Here is a 944-residue protein sequence, read N- to C-terminus: uncharacterized protein (944 aa).

This is an uncharacterized protein from Ureaplasma parvum serovar 3 (strain ATCC 700970).